The primary structure comprises 346 residues: UDP-3-O-acylglucosamine N-acyltransferase (346 aa).

H240 (proton acceptor) is an active-site residue.

Belongs to the transferase hexapeptide repeat family. LpxD subfamily. In terms of assembly, homotrimer.

It catalyses the reaction a UDP-3-O-[(3R)-3-hydroxyacyl]-alpha-D-glucosamine + a (3R)-hydroxyacyl-[ACP] = a UDP-2-N,3-O-bis[(3R)-3-hydroxyacyl]-alpha-D-glucosamine + holo-[ACP] + H(+). Its pathway is bacterial outer membrane biogenesis; LPS lipid A biosynthesis. In terms of biological role, catalyzes the N-acylation of UDP-3-O-acylglucosamine using 3-hydroxyacyl-ACP as the acyl donor. Is involved in the biosynthesis of lipid A, a phosphorylated glycolipid that anchors the lipopolysaccharide to the outer membrane of the cell. This is UDP-3-O-acylglucosamine N-acyltransferase from Bacteroides thetaiotaomicron (strain ATCC 29148 / DSM 2079 / JCM 5827 / CCUG 10774 / NCTC 10582 / VPI-5482 / E50).